A 161-amino-acid polypeptide reads, in one-letter code: Phosphopantetheine adenylyltransferase (161 aa).

Position 9 (S9) interacts with substrate. ATP-binding positions include 9 to 10 (SF) and H17. Substrate contacts are provided by K41, T74, and R88. ATP contacts are provided by residues 89–91 (GVR), E99, and 124–130 (NSFVASS).

This sequence belongs to the bacterial CoaD family. In terms of assembly, homohexamer. Mg(2+) is required as a cofactor.

The protein resides in the cytoplasm. The enzyme catalyses (R)-4'-phosphopantetheine + ATP + H(+) = 3'-dephospho-CoA + diphosphate. It functions in the pathway cofactor biosynthesis; coenzyme A biosynthesis; CoA from (R)-pantothenate: step 4/5. In terms of biological role, reversibly transfers an adenylyl group from ATP to 4'-phosphopantetheine, yielding dephospho-CoA (dPCoA) and pyrophosphate. This is Phosphopantetheine adenylyltransferase from Lactobacillus acidophilus (strain ATCC 700396 / NCK56 / N2 / NCFM).